Consider the following 514-residue polypeptide: tRNA-2-methylthio-N(6)-dimethylallyladenosine synthase (514 aa).

The interval 1–21 (MNEEQRKASSVDVLAERDKKA) is disordered. Positions 68–186 (RTFLIKTYGC…LPEILEEAYL (119 aa)) constitute an MTTase N-terminal domain. The [4Fe-4S] cluster site is built by C77, C113, C147, C223, C227, and C230. Residues 209–440 (REGNIKAWVN…KKVGHYSQIA (232 aa)) enclose the Radical SAM core domain. The TRAM domain occupies 442-505 (SKYEGQTVTV…QYSLNGSFVK (64 aa)).

This sequence belongs to the methylthiotransferase family. MiaB subfamily. In terms of assembly, monomer. The cofactor is [4Fe-4S] cluster.

Its subcellular location is the cytoplasm. The catalysed reaction is N(6)-dimethylallyladenosine(37) in tRNA + (sulfur carrier)-SH + AH2 + 2 S-adenosyl-L-methionine = 2-methylsulfanyl-N(6)-dimethylallyladenosine(37) in tRNA + (sulfur carrier)-H + 5'-deoxyadenosine + L-methionine + A + S-adenosyl-L-homocysteine + 2 H(+). In terms of biological role, catalyzes the methylthiolation of N6-(dimethylallyl)adenosine (i(6)A), leading to the formation of 2-methylthio-N6-(dimethylallyl)adenosine (ms(2)i(6)A) at position 37 in tRNAs that read codons beginning with uridine. The protein is tRNA-2-methylthio-N(6)-dimethylallyladenosine synthase of Staphylococcus aureus (strain MRSA252).